Consider the following 448-residue polypeptide: DNA repair protein RadA (448 aa).

A C4-type zinc finger spans residues 10 to 27 (CQHCGFTSPKWLGKCVQC). Residue 96–103 (GSPGVGKS) participates in ATP binding. Positions 253 to 257 (KNRFG) match the RadA KNRFG motif motif. Residues 351–448 (DVFINVSGGI…NAVGKIVEWM (98 aa)) are lon-protease-like.

It belongs to the RecA family. RadA subfamily.

In terms of biological role, DNA-dependent ATPase involved in processing of recombination intermediates, plays a role in repairing DNA breaks. Stimulates the branch migration of RecA-mediated strand transfer reactions, allowing the 3' invading strand to extend heteroduplex DNA faster. Binds ssDNA in the presence of ADP but not other nucleotides, has ATPase activity that is stimulated by ssDNA and various branched DNA structures, but inhibited by SSB. Does not have RecA's homology-searching function. This Helicobacter pylori (strain ATCC 700392 / 26695) (Campylobacter pylori) protein is DNA repair protein RadA.